A 115-amino-acid polypeptide reads, in one-letter code: MMKGQIAGLMKQAQQMQENMKKAQEQLALIEVEGVSGAGLVKVVMTCKNDVKRVSIDPSLLAEGEDKDLLEDLIAAAFNDAVRKAEATTQEKMGSLTSGLGGMAGMLPPGFKLPF.

The protein belongs to the YbaB/EbfC family. Homodimer.

The protein resides in the cytoplasm. The protein localises to the nucleoid. Its function is as follows. Binds to DNA and alters its conformation. May be involved in regulation of gene expression, nucleoid organization and DNA protection. This is Nucleoid-associated protein Rpic_1036 from Ralstonia pickettii (strain 12J).